The primary structure comprises 291 residues: Pyridoxal 5'-phosphate synthase subunit PdxS (291 aa).

Asp-23 is a D-ribose 5-phosphate binding site. Lys-80 serves as the catalytic Schiff-base intermediate with D-ribose 5-phosphate. D-ribose 5-phosphate is bound at residue Gly-152. Arg-164 lines the D-glyceraldehyde 3-phosphate pocket. D-ribose 5-phosphate is bound by residues Gly-213 and 234–235 (GS).

It belongs to the PdxS/SNZ family. In terms of assembly, in the presence of PdxT, forms a dodecamer of heterodimers.

The enzyme catalyses aldehydo-D-ribose 5-phosphate + D-glyceraldehyde 3-phosphate + L-glutamine = pyridoxal 5'-phosphate + L-glutamate + phosphate + 3 H2O + H(+). It participates in cofactor biosynthesis; pyridoxal 5'-phosphate biosynthesis. Catalyzes the formation of pyridoxal 5'-phosphate from ribose 5-phosphate (RBP), glyceraldehyde 3-phosphate (G3P) and ammonia. The ammonia is provided by the PdxT subunit. Can also use ribulose 5-phosphate and dihydroxyacetone phosphate as substrates, resulting from enzyme-catalyzed isomerization of RBP and G3P, respectively. In Haemophilus influenzae (strain PittGG), this protein is Pyridoxal 5'-phosphate synthase subunit PdxS.